The primary structure comprises 313 residues: Tyrosine recombinase XerD (313 aa).

The region spanning 17-102 (EDNDVIIEQF…TLRRFFQYLY (86 aa)) is the Core-binding (CB) domain. Residues 123–307 (RLPKDLSEQQ…ATERLKVLHQ (185 aa)) enclose the Tyr recombinase domain. Active-site residues include R163, K187, H259, R262, and H285. Residue Y294 is the O-(3'-phospho-DNA)-tyrosine intermediate of the active site.

It belongs to the 'phage' integrase family. XerD subfamily. As to quaternary structure, forms a cyclic heterotetrameric complex composed of two molecules of XerC and two molecules of XerD, in which XerC interacts with XerD via its C-terminal region, XerD interacts with XerC via its C-terminal region and so on.

Its subcellular location is the cytoplasm. Its activity is regulated as follows. FtsK may regulate the catalytic switch between XerC and XerD in the heterotetrameric complex during the two steps of the recombination process. Functionally, site-specific tyrosine recombinase, which acts by catalyzing the cutting and rejoining of the recombining DNA molecules. Binds cooperatively to specific DNA consensus sequences that are separated from XerC binding sites by a short central region, forming the heterotetrameric XerC-XerD complex that recombines DNA substrates. The complex is essential to convert dimers of the bacterial chromosome into monomers to permit their segregation at cell division. It also contributes to the segregational stability of plasmids. In the complex XerD specifically exchanges the bottom DNA strands. This Proteus mirabilis protein is Tyrosine recombinase XerD.